The sequence spans 207 residues: Chloramphenicol acetyltransferase (207 aa).

H186 acts as the Proton acceptor in catalysis.

It belongs to the chloramphenicol acetyltransferase family. As to quaternary structure, homotrimer.

It carries out the reaction chloramphenicol + acetyl-CoA = chloramphenicol 3-acetate + CoA. In terms of biological role, this enzyme is an effector of chloramphenicol resistance in bacteria. This is Chloramphenicol acetyltransferase from Campylobacter coli.